The chain runs to 322 residues: Arginase-1 (322 aa).

The interval Met-1–Gly-27 is disordered. The residue at position 7 (Ser-7) is a Phosphoserine. Residue Lys-17 is modified to N6-succinyllysine. Ser-72 is subject to Phosphoserine. Lys-75 is modified (N6-succinyllysine). Residues His-101, Asp-124, His-126, and Asp-128 each contribute to the Mn(2+) site. Substrate-binding positions include His-126–Asn-130 and Thr-137–Asn-139. The residue at position 163 (Ser-163) is a Phosphoserine. Asp-183 is a substrate binding site. Ser-217 carries the phosphoserine modification. The Mn(2+) site is built by Asp-232 and Asp-234. The substrate site is built by Thr-246 and Glu-277.

This sequence belongs to the arginase family. In terms of assembly, homotrimer. Interacts with CMTM6. Requires Mn(2+) as cofactor.

The protein resides in the cytoplasm. It carries out the reaction L-arginine + H2O = urea + L-ornithine. It functions in the pathway nitrogen metabolism; urea cycle; L-ornithine and urea from L-arginine: step 1/1. The polypeptide is Arginase-1 (ARG1) (Sus scrofa (Pig)).